Here is a 336-residue protein sequence, read N- to C-terminus: MAMARSRRDSVWKYCWGLLMVLCRTAISRSIVLEPIYWNSSNSKFLPGQGLVLYPQIGDKLDIICPKVDSKTVGQYEYYKVYMVDKDQADRCTIKKENTPLLNCARPDQDVKFTIKFQEFSPNLWGLEFQKNKDYYIISTSNGSLEGLDNQEGGVCQTRAMKILMKVGQDASSAGSARNHGPTRRPELEAGTNGRSSTTSPFVKPNPGSSTDGNSAGHSGNNLLGSEVALFAGIASGCIIFIVIIITLVVLLLKYRRRHRKHSPQHTTTLSLSTLATPKRGGNNNGSEPSDVIIPLRTADSVFCPHYEKVSGDYGHPVYIVQEMPPQSPANIYYKV.

An N-terminal signal peptide occupies residues 1–28 (MAMARSRRDSVWKYCWGLLMVLCRTAIS). Over 29 to 232 (RSIVLEPIYW…LLGSEVALFA (204 aa)) the chain is Extracellular. The 137-residue stretch at 31–167 (IVLEPIYWNS…TRAMKILMKV (137 aa)) folds into the Ephrin RBD domain. Asparagine 39 carries an N-linked (GlcNAc...) asparagine glycan. Intrachain disulfides connect cysteine 65/cysteine 104 and cysteine 92/cysteine 156. Asparagine 142 carries an N-linked (GlcNAc...) asparagine glycan. A disordered region spans residues 170–216 (DASSAGSARNHGPTRRPELEAGTNGRSSTTSPFVKPNPGSSTDGNSA). Polar residues predominate over residues 193 to 216 (NGRSSTTSPFVKPNPGSSTDGNSA). A helical transmembrane segment spans residues 233-253 (GIASGCIIFIVIIITLVVLLL). The Cytoplasmic segment spans residues 254–336 (KYRRRHRKHS…QSPANIYYKV (83 aa)). Serine 263 carries the post-translational modification Phosphoserine. Threonine 277 is subject to Phosphothreonine. At arginine 280 the chain carries Omega-N-methylarginine. The PDZ-binding motif lies at 334–336 (YKV).

Belongs to the ephrin family. In terms of assembly, interacts with PDZRN3. Binds to the ephrin receptor EPHA3, EPHA4 and EPHB4. Inducible phosphorylation of tyrosine residues in the cytoplasmic domain. In terms of tissue distribution, expressed in inner and outer pillar cells of the organ of Corti (at protein level). Expressed on lateral floor plate cells, specifically on commissural axon segments that have passed through the floor plate. Expressed in cells of the retinal ganglion cell layer during retinal axon guidance to the optic disk. Expressed in myogenic progenitor cells.

Its subcellular location is the cell membrane. The protein localises to the cell junction. It is found in the adherens junction. Its function is as follows. Cell surface transmembrane ligand for Eph receptors, a family of receptor tyrosine kinases which are crucial for migration, repulsion and adhesion during neuronal, vascular and epithelial development. Binds promiscuously Eph receptors residing on adjacent cells, leading to contact-dependent bidirectional signaling into neighboring cells. The signaling pathway downstream of the receptor is referred to as forward signaling while the signaling pathway downstream of the ephrin ligand is referred to as reverse signaling. Binds to receptor tyrosine kinase including EPHA4, EPHA3 and EPHB4. Together with EPHB4 plays a central role in heart morphogenesis and angiogenesis through regulation of cell adhesion and cell migration. EPHB4-mediated forward signaling controls cellular repulsion and segregation from EFNB2-expressing cells. May play a role in constraining the orientation of longitudinally projecting axons. In Mus musculus (Mouse), this protein is Ephrin-B2 (Efnb2).